A 278-amino-acid chain; its full sequence is Putative pyruvate, phosphate dikinase regulatory protein (278 aa).

ADP is bound at residue 149–156 (GVSRSSKT).

Belongs to the pyruvate, phosphate/water dikinase regulatory protein family. PDRP subfamily.

The enzyme catalyses N(tele)-phospho-L-histidyl/L-threonyl-[pyruvate, phosphate dikinase] + ADP = N(tele)-phospho-L-histidyl/O-phospho-L-threonyl-[pyruvate, phosphate dikinase] + AMP + H(+). The catalysed reaction is N(tele)-phospho-L-histidyl/O-phospho-L-threonyl-[pyruvate, phosphate dikinase] + phosphate + H(+) = N(tele)-phospho-L-histidyl/L-threonyl-[pyruvate, phosphate dikinase] + diphosphate. Bifunctional serine/threonine kinase and phosphorylase involved in the regulation of the pyruvate, phosphate dikinase (PPDK) by catalyzing its phosphorylation/dephosphorylation. The sequence is that of Putative pyruvate, phosphate dikinase regulatory protein from Erythrobacter litoralis (strain HTCC2594).